Here is a 547-residue protein sequence, read N- to C-terminus: KsdD-like steroid dehydrogenase MSMEG_5835 (547 aa).

5-36 (DVIVVGAGLAGLVAACELVERGHSVIIVDQEN) serves as a coordination point for FAD.

Belongs to the FAD-dependent oxidoreductase 2 family. FAD is required as a cofactor.

It participates in lipid metabolism; steroid biosynthesis. In terms of biological role, able to catalyze the elimination of the C-1 and C-2 hydrogen atoms of the A-ring from the polycyclic ring structure of 3-ketosteroids, but the ketosteroid dehydrogenase activity is low compared to KsdD in the cholesterol degradation process. The low activity could be due to different substrate specificity. The sequence is that of KsdD-like steroid dehydrogenase MSMEG_5835 from Mycolicibacterium smegmatis (strain ATCC 700084 / mc(2)155) (Mycobacterium smegmatis).